Consider the following 1504-residue polypeptide: NAC-alpha domain-containing protein 1 (1504 aa).

Disordered regions lie at residues 127–150, 208–261, 315–356, 396–436, 460–525, 539–565, 701–812, 834–1064, 1099–1366, and 1430–1467; these read KPGA…ASAW, DREG…HGPH, PSDW…SSWS, LPQE…STSA, DTSA…TNSQ, GLES…TPTV, VLPP…EEGV, DLES…LPVA, PFQH…AMSK, and PSEP…GLEP. The segment covering 342 to 354 has biased composition (low complexity); the sequence is SSESSLSADSSSS. A compositionally biased stretch (acidic residues) spans 398 to 407; that stretch reads QEEEEDEEDV. Composition is skewed to low complexity over residues 408–422 and 462–475; these read AATA…ATPD and SAAS…SYAG. A compositionally biased stretch (polar residues) spans 510–525; the sequence is STPQTSEQEICLTNSQ. Polar residues predominate over residues 775 to 792; the sequence is PQESPTASSLTLQSSHPT. The span at 930-939 shows a compositional bias: low complexity; sequence PPASNQAQQN. A compositionally biased stretch (polar residues) spans 958-968; the sequence is STLSTKTSEPT. Basic and acidic residues predominate over residues 989–1005; it reads EAHDGVKTHSPQREALR. Residue Ser998 is modified to Phosphoserine. Positions 1016 to 1031 are enriched in polar residues; sequence SPGQGNGPKSATSQGA. Pro residues predominate over residues 1159–1171; the sequence is PGPPDPCLCPPPQ. Positions 1213–1222 are enriched in polar residues; that stretch reads VSLSPHSTLN. At Ser1268 the chain carries Phosphoserine. One can recognise an NAC-A/B domain in the interval 1354 to 1419; sequence SRSEKKARKA…AKIEDLSQQV (66 aa). Residues 1451–1464 show a composition bias toward acidic residues; that stretch reads EEQEEEDEEVEEAG.

It belongs to the NAC-alpha family.

It localises to the cytoplasm. It is found in the nucleus. May prevent inappropriate targeting of non-secretory polypeptides to the endoplasmic reticulum (ER). May bind to nascent polypeptide chains as they emerge from the ribosome and block their interaction with the signal recognition particle (SRP), which normally targets nascent secretory peptides to the ER. May also reduce the inherent affinity of ribosomes for protein translocation sites in the ER membrane (M sites). This Mus musculus (Mouse) protein is NAC-alpha domain-containing protein 1 (Nacad).